A 518-amino-acid polypeptide reads, in one-letter code: T-box transcription factor TBX5 (518 aa).

A disordered region spans residues 1–46 (MADADEGFGLAHTPLEPDAKDLPCDSKPESALGAPSKSPSSPQAAF). Basic and acidic residues predominate over residues 15 to 28 (LEPDAKDLPCDSKP). Residues 34–45 (APSKSPSSPQAA) are compositionally biased toward low complexity. A DNA-binding region (T-box) is located at residues 58–238 (LHERELWLKF…NNPFAKGFRG (181 aa)). Positions 250–356 (MQSKEYPVVP…PSEEDSFYRS (107 aa)) are disordered. Polar residues predominate over residues 262 to 301 (TVRQKVASNHSPFSSESRALSTSSNLGSQYQCENGVSGPS). Lys339 carries the N6-acetyllysine modification.

In terms of assembly, monomer. Homodimer (via the T-box); binds DNA as homodimer. Interacts (via the T-box) with NKX2-5 (via the homeobox); this complex binds DNA. Interacts with GATA4. Interacts with KAT2A and KAT2B. In terms of processing, acetylation at Lys-339 by KAT2A and KAT2B promotes nuclear retention.

Its subcellular location is the nucleus. It is found in the cytoplasm. DNA-binding protein that regulates the transcription of several genes and is involved in heart development and limb pattern formation. Binds to the core DNA motif of NPPA promoter. This chain is T-box transcription factor TBX5 (TBX5), found in Homo sapiens (Human).